We begin with the raw amino-acid sequence, 882 residues long: Valine--tRNA ligase (882 aa).

The 'HIGH' region motif lies at 45–55 (PNVTGKLHLGH). The short motif at 519–523 (KMSKS) is the 'KMSKS' region element. Lys522 is an ATP binding site. Residues 808 to 882 (LADLLNVEEE…RIAEMQKLVK (75 aa)) adopt a coiled-coil conformation.

It belongs to the class-I aminoacyl-tRNA synthetase family. ValS type 1 subfamily. Monomer.

The protein localises to the cytoplasm. It carries out the reaction tRNA(Val) + L-valine + ATP = L-valyl-tRNA(Val) + AMP + diphosphate. Catalyzes the attachment of valine to tRNA(Val). As ValRS can inadvertently accommodate and process structurally similar amino acids such as threonine, to avoid such errors, it has a 'posttransfer' editing activity that hydrolyzes mischarged Thr-tRNA(Val) in a tRNA-dependent manner. The chain is Valine--tRNA ligase from Streptococcus pyogenes serotype M3 (strain ATCC BAA-595 / MGAS315).